The sequence spans 267 residues: 2-keto-3-deoxy-L-rhamnonate aldolase (267 aa).

Histidine 49 functions as the Proton acceptor in the catalytic mechanism. Glutamine 151 is a binding site for substrate. Glutamate 153 is a Mg(2+) binding site. Positions 178 and 179 each coordinate substrate. Aspartate 179 lines the Mg(2+) pocket.

It belongs to the HpcH/HpaI aldolase family. KDR aldolase subfamily. As to quaternary structure, homohexamer. The cofactor is Mg(2+).

It catalyses the reaction 2-dehydro-3-deoxy-L-rhamnonate = (S)-lactaldehyde + pyruvate. Its function is as follows. Catalyzes the reversible retro-aldol cleavage of 2-keto-3-deoxy-L-rhamnonate (KDR) to pyruvate and lactaldehyde. The polypeptide is 2-keto-3-deoxy-L-rhamnonate aldolase (Escherichia coli O6:K15:H31 (strain 536 / UPEC)).